The sequence spans 176 residues: Protein singles bar (176 aa).

Helical transmembrane passes span 13-35 (LGIR…LSRI), 71-91 (FLAT…CYAF), 111-131 (LASC…VVWL), and 140-160 (GFWA…AGIL). The 144-residue stretch at 30-173 (FVLSRIGLLK…DAYLAFRHFR (144 aa)) folds into the MARVEL domain.

The protein localises to the membrane. In terms of biological role, essential for myoblast fusion in developing embryos and pupae, and consequently is essential for muscle formation in adults. Required for progression past the pre-fusion complex stage of myoblast fusion. This is Protein singles bar from Drosophila melanogaster (Fruit fly).